We begin with the raw amino-acid sequence, 20 residues long: Short cationic peptide-3a (20 aa).

A Glutamic acid 1-amide modification is found at Glu20.

Expressed by the venom gland.

The protein localises to the secreted. This is Short cationic peptide-3a from Cupiennius salei (American wandering spider).